Reading from the N-terminus, the 508-residue chain is Light-independent protochlorophyllide reductase subunit B (508 aa).

Position 36 (D36) interacts with [4Fe-4S] cluster. The active-site Proton donor is the D294. Position 429-430 (429-430) interacts with substrate; it reads GM.

This sequence belongs to the ChlB/BchB/BchZ family. Protochlorophyllide reductase is composed of three subunits; ChlL, ChlN and ChlB. Forms a heterotetramer of two ChlB and two ChlN subunits. [4Fe-4S] cluster serves as cofactor.

The enzyme catalyses chlorophyllide a + oxidized 2[4Fe-4S]-[ferredoxin] + 2 ADP + 2 phosphate = protochlorophyllide a + reduced 2[4Fe-4S]-[ferredoxin] + 2 ATP + 2 H2O. It participates in porphyrin-containing compound metabolism; chlorophyll biosynthesis (light-independent). Component of the dark-operative protochlorophyllide reductase (DPOR) that uses Mg-ATP and reduced ferredoxin to reduce ring D of protochlorophyllide (Pchlide) to form chlorophyllide a (Chlide). This reaction is light-independent. The NB-protein (ChlN-ChlB) is the catalytic component of the complex. The chain is Light-independent protochlorophyllide reductase subunit B from Gloeothece citriformis (strain PCC 7424) (Cyanothece sp. (strain PCC 7424)).